The following is a 378-amino-acid chain: Alginate lyase (378 aa).

An N-terminal signal peptide occupies residues 1 to 28 (MQTPKLIRPTLLSMAILSSMAWATGASA). Residues 67–68 (SK), 140–141 (HT), and tyrosine 258 contribute to the substrate site.

This sequence belongs to the polysaccharide lyase 5 family.

It localises to the periplasm. It catalyses the reaction Eliminative cleavage of alginate to give oligosaccharides with 4-deoxy-alpha-L-erythro-hex-4-enuronosyl groups at their non-reducing ends and beta-D-mannuronate at their reducing end.. The monovalent cation sodium enhances activity but is not absolutely required. Functionally, catalyzes the depolymerization of alginate by cleaving the beta-1,4 glycosidic bond between two adjacent sugar residues via a beta-elimination mechanism. Degrades deacetylated polymannuronate (polyM) alginate from P.aeruginosa more efficiently than non-deacetylated polyM and alginate from M.pyrifera. AlgL from P.syringae also degrades its own alginate, which may indicate a role in cleaving preformed alginate and/or in determining the length of the alginate polymer. May serve to degrade mislocalized alginate that is trapped in the periplasmic space. This Pseudomonas syringae pv. syringae protein is Alginate lyase.